The chain runs to 215 residues: Nascent polypeptide-associated complex subunit alpha (215 aa).

Residues 1–81 (MPGEATETVP…SEKKARKAMS (81 aa)) form a disordered region. Over residues 9–28 (VPATEQELPQPQAETGSGTE) the composition is skewed to polar residues. The segment covering 29–42 (SDSDESVPELEEQD) has biased composition (acidic residues). Ser-43 carries the post-translational modification Phosphoserine; by ILK1. Residues 44–57 (TQATTQQAQLAAAA) are compositionally biased toward low complexity. Positions 69-80 (QSRSEKKARKAM) are required for DNA-binding. Residues 70–135 (SRSEKKARKA…AKIEDLSQQA (66 aa)) form the NAC-A/B domain. The segment at 93 to 108 (RVTIRKSKNILFVITK) is RNA/DNA-binding. Ser-132 carries the phosphoserine modification. Lys-142 carries the N6-acetyllysine; alternate modification. Lys-142 is covalently cross-linked (Glycyl lysine isopeptide (Lys-Gly) (interchain with G-Cter in SUMO2); alternate). Residue Thr-159 is modified to Phosphothreonine; by GSK3-beta. Thr-161 bears the Phosphothreonine mark. Ser-166, Ser-186, Ser-191, and Ser-203 each carry phosphoserine. A UBA domain is found at 176-213 (VEVKDIELVMSQANVSRAKAVRALKNNSNDIVNAIMEL).

This sequence belongs to the NAC-alpha family. Interacts with TBP and JUN. Part of the nascent polypeptide-associated complex (NAC), which is a heterodimer of NACA and BTF3 (via NAC-A/B domains). NAC associates with ribosomes through the BTF3/NACB subunit and contacts the ribosomal protein L23, which is positioned near the exiting site. Both subunits can contact nascent polypeptide chains. NACA may also form homodimers, and only this form binds DNA. Phosphorylation of Thr-159 by GSK3B may promote proteasome mediated degradation. Phosphorylation of Ser-43 by ILK during cell adhesion may promote nuclear localization. As to expression, ubiquitously expressed.

The protein localises to the cytoplasm. It localises to the nucleus. Prevents inappropriate targeting of non-secretory polypeptides to the endoplasmic reticulum (ER). Binds to nascent polypeptide chains as they emerge from the ribosome and blocks their interaction with the signal recognition particle (SRP), which normally targets nascent secretory peptides to the ER. Also reduces the inherent affinity of ribosomes for protein translocation sites in the ER membrane (M sites). May act as a specific coactivator for JUN, binding to DNA and stabilizing the interaction of JUN homodimers with target gene promoters. The protein is Nascent polypeptide-associated complex subunit alpha (NACA) of Homo sapiens (Human).